The chain runs to 205 residues: Gap junction epsilon-1 protein (205 aa).

Residues 1 to 23 (MSLNYIKNFYEGCVKPPTVIGQF) lie on the Cytoplasmic side of the membrane. Residues 24–44 (HTLFFGSIRIFFLGVLGFAVY) traverse the membrane as a helical segment. Residues 45-76 (GNEALHFICDPDKREVNLFCYNQFRPITPQVS) lie on the Extracellular side of the membrane. Disulfide bonds link C53-C161 and C64-C148. A helical membrane pass occupies residues 77–97 (FSALQLVIVLVPGALFHLYAA). The Cytoplasmic segment spans residues 98-112 (CKSINQECILQKPIY). A helical transmembrane segment spans residues 113–133 (TIIYILSVLLRISLAAIAFWL). Residues 134-170 (QIYLFGFQVKSLYLCDARSLGENMIIRCMVPEHFEKT) are Extracellular-facing. Residues 171–191 (IFLIAINTFTTITILLFVAEI) traverse the membrane as a helical segment. Residues 192–205 (FEIIFRRLYFPFRQ) are Cytoplasmic-facing.

Belongs to the connexin family. Beta-type (group I) subfamily. A connexon is composed of a hexamer of connexins. In terms of tissue distribution, not detected in lens or retina.

Its subcellular location is the cell membrane. Its function is as follows. Mediates calcium-independent ATP release, suggesting activity as a hemichannel. Does not form functional gap junctions. The chain is Gap junction epsilon-1 protein (GJE1) from Homo sapiens (Human).